Here is a 167-residue protein sequence, read N- to C-terminus: Signal recognition particle subunit SRP21 (167 aa).

Ser2 bears the N-acetylserine mark. Residues 123–139 (VEKSDPAAKKTATEPKQ) show a composition bias toward basic and acidic residues. The disordered stretch occupies residues 123–167 (VEKSDPAAKKTATEPKQKANAVQNNNGNSAASKKKKNKNKGKKKR). Over residues 154-167 (SKKKKNKNKGKKKR) the composition is skewed to basic residues.

In terms of assembly, fungal signal recognition particle (SRP) complex consists of a 7S RNA molecule (scR1) and at least six protein subunits: SRP72, SRP68, SRP54, SEC65, SRP21 and SRP14. At least SRP14, SRP21, SRP68 and SRP72 are proposed to get assembled together with scR1 RNA as a pre-SRP complex in the nucleolus which is exported to the cytoplasm.

It is found in the cytoplasm. The protein localises to the nucleus. Signal-recognition-particle (SRP) assembly has a crucial role in targeting secretory proteins to the rough endoplasmic reticulum (ER) membrane. SRP is required for the cotranslational protein translocation for ER import and preferentially recognizes strongly hydrophobic signal sequences. It is involved in targeting the nascent chain-ribosome (RNC) complex to the ER and is proposed to participate in the arrest of nascent chain elongation during membrane targeting. The polypeptide is Signal recognition particle subunit SRP21 (SRP21) (Saccharomyces cerevisiae (strain ATCC 204508 / S288c) (Baker's yeast)).